The sequence spans 612 residues: Glycosyltransferase 25 family member (612 aa).

The first 20 residues, 1–20, serve as a signal peptide directing secretion; that stretch reads MNKQVIFGLLLACILVCISG. 4 N-linked (GlcNAc...) asparagine glycosylation sites follow: Asn106, Asn227, Asn263, and Asn524. The Prevents secretion from ER signature appears at 609–612; it reads HQEL.

Belongs to the glycosyltransferase 25 family.

It localises to the endoplasmic reticulum lumen. The polypeptide is Glycosyltransferase 25 family member (Drosophila melanogaster (Fruit fly)).